We begin with the raw amino-acid sequence, 273 residues long: Dermonecrotic toxin LdSicTox-alphaIB3aiv (273 aa).

The active site involves His-5. Residues Glu-25 and Asp-27 each coordinate Mg(2+). His-41 (nucleophile) is an active-site residue. 2 disulfides stabilise this stretch: Cys-45–Cys-51 and Cys-47–Cys-190. A Mg(2+)-binding site is contributed by Asp-85.

It belongs to the arthropod phospholipase D family. Class II subfamily. The cofactor is Mg(2+). In terms of tissue distribution, expressed by the venom gland.

The protein resides in the secreted. It catalyses the reaction an N-(acyl)-sphingosylphosphocholine = an N-(acyl)-sphingosyl-1,3-cyclic phosphate + choline. The catalysed reaction is an N-(acyl)-sphingosylphosphoethanolamine = an N-(acyl)-sphingosyl-1,3-cyclic phosphate + ethanolamine. It carries out the reaction a 1-acyl-sn-glycero-3-phosphocholine = a 1-acyl-sn-glycero-2,3-cyclic phosphate + choline. The enzyme catalyses a 1-acyl-sn-glycero-3-phosphoethanolamine = a 1-acyl-sn-glycero-2,3-cyclic phosphate + ethanolamine. Dermonecrotic toxins cleave the phosphodiester linkage between the phosphate and headgroup of certain phospholipids (sphingolipid and lysolipid substrates), forming an alcohol (often choline) and a cyclic phosphate. This toxin acts on sphingomyelin (SM). It may also act on ceramide phosphoethanolamine (CPE), lysophosphatidylcholine (LPC) and lysophosphatidylethanolamine (LPE), but not on lysophosphatidylserine (LPS), and lysophosphatidylglycerol (LPG). It acts by transphosphatidylation, releasing exclusively cyclic phosphate products as second products. Induces dermonecrosis, hemolysis, increased vascular permeability, edema, inflammatory response, and platelet aggregation. In Loxosceles deserta (Desert recluse spider), this protein is Dermonecrotic toxin LdSicTox-alphaIB3aiv.